The chain runs to 267 residues: MEMO1 family protein MA_0601 (267 aa).

Belongs to the MEMO1 family.

In Methanosarcina acetivorans (strain ATCC 35395 / DSM 2834 / JCM 12185 / C2A), this protein is MEMO1 family protein MA_0601.